Consider the following 283-residue polypeptide: Pantothenate synthetase (283 aa).

Residue 26–33 coordinates ATP; that stretch reads MGNLHEGH. Catalysis depends on histidine 33, which acts as the Proton donor. Glutamine 57 provides a ligand contact to (R)-pantoate. Beta-alanine is bound at residue glutamine 57. 144 to 147 lines the ATP pocket; sequence GKKD. Residue glutamine 150 participates in (R)-pantoate binding. Residues valine 173 and 181–184 each bind ATP; that span reads LSSR.

This sequence belongs to the pantothenate synthetase family. As to quaternary structure, homodimer.

The protein resides in the cytoplasm. It catalyses the reaction (R)-pantoate + beta-alanine + ATP = (R)-pantothenate + AMP + diphosphate + H(+). It participates in cofactor biosynthesis; (R)-pantothenate biosynthesis; (R)-pantothenate from (R)-pantoate and beta-alanine: step 1/1. Functionally, catalyzes the condensation of pantoate with beta-alanine in an ATP-dependent reaction via a pantoyl-adenylate intermediate. In Ralstonia pickettii (strain 12J), this protein is Pantothenate synthetase.